We begin with the raw amino-acid sequence, 65 residues long: Large ribosomal subunit protein bL35c (65 aa).

The disordered stretch occupies residues 18–50; sequence SSGKILRHKASKSHLLQKKSSKHRRHLSSTCQV. Over residues 22–44 the composition is skewed to basic residues; the sequence is ILRHKASKSHLLQKKSSKHRRHL.

The protein belongs to the bacterial ribosomal protein bL35 family.

It is found in the plastid. The protein resides in the chloroplast. The chain is Large ribosomal subunit protein bL35c from Porphyra purpurea (Red seaweed).